The sequence spans 1133 residues: Exportin-4 (1133 aa).

The protein belongs to the exportin family. Interacts with Ran and cargo proteins in a GTP-dependent manner.

Its subcellular location is the cytoplasm. It localises to the nucleus. Its function is as follows. Mediates the nuclear export of proteins (cargos). In the nucleus binds cooperatively to its cargo and to the GTPase Ran in its active GTP-bound form. Docking of this trimeric complex to the nuclear pore complex (NPC) is mediated through binding to nucleoporins. Upon transit of a nuclear export complex into the cytoplasm, disassembling of the complex and hydrolysis of Ran-GTP to Ran-GDP cause release of the cargo from the export receptor. Xpo4 then return to the nuclear compartment and mediate another round of transport. The directionality of nuclear export is thought to be conferred by an asymmetric distribution of the GTP- and GDP-bound forms of Ran between the cytoplasm and nucleus. The chain is Exportin-4 (xpo4) from Dictyostelium discoideum (Social amoeba).